Here is a 133-residue protein sequence, read N- to C-terminus: ATP synthase epsilon chain, chloroplastic (133 aa).

Belongs to the ATPase epsilon chain family. As to quaternary structure, F-type ATPases have 2 components, CF(1) - the catalytic core - and CF(0) - the membrane proton channel. CF(1) has five subunits: alpha(3), beta(3), gamma(1), delta(1), epsilon(1). CF(0) has three main subunits: a, b and c.

Its subcellular location is the plastid. It is found in the chloroplast thylakoid membrane. Functionally, produces ATP from ADP in the presence of a proton gradient across the membrane. This is ATP synthase epsilon chain, chloroplastic from Zygnema circumcarinatum (Green alga).